We begin with the raw amino-acid sequence, 1088 residues long: Extended synaptotagmin-1 (1088 aa).

Residue methionine 1 is modified to N-acetylmethionine. At 1-30 (MERSPEEGAGPEPSGQSPATDSTRERDGGS) the chain is on the cytoplasmic side. Positions 1–38 (MERSPEEGAGPEPSGQSPATDSTRERDGGSGVPPAGPG) are disordered. The helical transmembrane segment at 31-51 (GVPPAGPGAASEALAVLTSFG) threads the bilayer. Residues 52–54 (RRL) are Lumenal-facing. A helical transmembrane segment spans residues 55–75 (LVLVPVYLAGAAGLSVGFVLF). Over 76-1088 (GLALYLGWRR…LIDDRDKGGS (1013 aa)) the chain is Cytoplasmic. Residues 127-305 (DVEKAEWLNK…LPNRLLVPLV (179 aa)) enclose the SMP-LTD domain. 4 C2 domains span residues 304-425 (LVPD…DNWY), 446-572 (DAEK…QLSS), 618-740 (DAPP…DEWL), and 771-888 (QVNS…ALSG). Phosphoserine; by CDK5 is present on serine 316. 8 residues coordinate Ca(2+): lysine 336, aspartate 337, aspartate 349, aspartate 396, aspartate 398, aspartate 400, aspartate 402, and aspartate 403. A disordered region spans residues 599–630 (TEPGAQDWDSESPETGSSVDAPPRPYHTTPNS). Lysine 806 is modified (N6-acetyllysine). A Phosphoserine modification is found at serine 809. The segment at 911–930 (HSHSSSSLNEEPEVLGDPTH) is disordered. Residues serine 933 and serine 947 each carry the phosphoserine modification. Residues 955-1077 (PLGQVKLTVW…DLSQGAAQWY (123 aa)) enclose the C2 5 domain. Residue tyrosine 993 is modified to Phosphotyrosine. The interval 1002–1009 (KNRGTKRK) is required for phosphatidylinositol 4,5-bisphosphate-dependent location at the cell membrane.

It belongs to the extended synaptotagmin family. As to quaternary structure, interacts with ESYT2 and ESYT3. Interacts with ADGRD1; inhibiting the G-protein-coupled receptor activity of ADGRD1. Interaction with ADGRD1 is abolished when cytosolic calcium increases, relieving ADGRD1 G-protein-coupled receptor activity. Interacts (phosphorylated form) with SLC2A4. Post-translationally, phosphorylated on Ser residues in insulin-treated adipocytes (in vitro); this promotes interaction with SLC2A4. Ubiquitously expressed with a higher expression in spleen and white adipose tissue.

It localises to the endoplasmic reticulum membrane. Its subcellular location is the cell membrane. In terms of biological role, binds calcium (via the C2 domains) and translocates to sites of contact between the endoplasmic reticulum and the cell membrane in response to increased cytosolic calcium levels. Helps tether the endoplasmic reticulum to the cell membrane and promotes the formation of appositions between the endoplasmic reticulum and the cell membrane. Acts as an inhibitor of ADGRD1 G-protein-coupled receptor activity in absence of cytosolic calcium. Binds glycerophospholipids in a barrel-like domain and may play a role in cellular lipid transport. The chain is Extended synaptotagmin-1 (Esyt1) from Rattus norvegicus (Rat).